Here is an 868-residue protein sequence, read N- to C-terminus: Protein translocase subunit SecA (868 aa).

ATP-binding positions include glutamine 87, 105–109, and aspartate 500; that span reads GEGKT. The Zn(2+) site is built by cysteine 849, cysteine 851, cysteine 860, and histidine 861.

It belongs to the SecA family. In terms of assembly, monomer and homodimer. Part of the essential Sec protein translocation apparatus which comprises SecA, SecYEG and auxiliary proteins SecDF-YajC and YidC. The cofactor is Zn(2+).

The protein localises to the cell membrane. Its subcellular location is the cytoplasm. It catalyses the reaction ATP + H2O + cellular proteinSide 1 = ADP + phosphate + cellular proteinSide 2.. Part of the Sec protein translocase complex. Interacts with the SecYEG preprotein conducting channel. Has a central role in coupling the hydrolysis of ATP to the transfer of proteins into and across the cell membrane, serving both as a receptor for the preprotein-SecB complex and as an ATP-driven molecular motor driving the stepwise translocation of polypeptide chains across the membrane. The polypeptide is Protein translocase subunit SecA (Wolbachia pipientis wMel).